Consider the following 511-residue polypeptide: Maturase K (511 aa).

It belongs to the intron maturase 2 family. MatK subfamily.

It localises to the plastid. Its subcellular location is the chloroplast. Usually encoded in the trnK tRNA gene intron. Probably assists in splicing its own and other chloroplast group II introns. The chain is Maturase K from Triticum aestivum (Wheat).